The chain runs to 53 residues: MAQKRGTRLGCNDCNEINYITRKNAKKNPEKLSLNKYCSRCRGTTVHKEVKRK.

Belongs to the bacterial ribosomal protein bL33 family.

The protein is Large ribosomal subunit protein bL33A of Mycoplasmoides gallisepticum (strain R(low / passage 15 / clone 2)) (Mycoplasma gallisepticum).